The sequence spans 443 residues: Transmembrane protein 184C (443 aa).

Helical transmembrane passes span 15 to 35 (LVVL…IWKL), 46 to 66 (AWFI…WGIL), 84 to 104 (ILWM…YPDI), 182 to 202 (PVTT…EGDF), 210 to 230 (YLVI…VLFY), 252 to 272 (VVFV…AGVI), and 284 to 304 (VATG…AVAH). The segment covering 369–378 (TSLLSSSTQD) has biased composition (polar residues). The tract at residues 369–422 (TSLLSSSTQDPISAASSIPPSPSGHYQGFGQTITPQTTPTATTMPEELYSADSP) is disordered. Residues 399 to 411 (QTITPQTTPTATT) are compositionally biased toward low complexity.

It belongs to the TMEM184 family.

The protein resides in the membrane. Functionally, may play a role in cell growth. This chain is Transmembrane protein 184C (tmem184c), found in Xenopus tropicalis (Western clawed frog).